The sequence spans 61 residues: Early 3 Conserved Region 1-alpha protein (61 aa).

Topologically, residues 1 to 14 (MSNSSNSTSLSNFS) are lumenal. Residues Asn-3, Asn-6, and Asn-12 are each glycosylated (N-linked (GlcNAc...) asparagine; by host). Residues 15-35 (GIGVGVILTLVILFILILALL) form a helical membrane-spanning segment. The Cytoplasmic segment spans residues 36–61 (CLRVAACCTHVCTYCQLFKRWGQHPR).

The protein belongs to the adenoviridae E3-CR1 family. Interacts with E3 RID alpha and E3 RID beta. Only 1 of 3 three potential glycosylation sites is glycosylated. Oligosaccharides are not processed from high mannose to the complex type because the protein is retained in the endoplasmic reticulum.

The protein resides in the host endoplasmic reticulum membrane. It localises to the host cell membrane. In terms of biological role, prevents infected cell apoptosis induced by the host immune system. May act by down-regulating host TRAIL receptors. May act in complex with E3 RID alpha and beta. May play a role on cellular apoptosis regulation in the ER. The sequence is that of Early 3 Conserved Region 1-alpha protein from Human adenovirus C serotype 2 (HAdV-2).